The sequence spans 526 residues: Vang-like protein 1 (526 aa).

Low complexity predominate over residues 1-15; the sequence is MDTESTYSGYSYYSS. Residues 1-87 form a disordered region; sequence MDTESTYSGY…TTAITGTSEH (87 aa). The Cytoplasmic portion of the chain corresponds to 1-114; it reads MDTESTYSGY…VGLDCKRYLG (114 aa). Residues 75-87 are compositionally biased toward polar residues; that stretch reads GETTTAITGTSEH. A phosphoserine mark is found at S88 and S90. Residues 115 to 135 form a helical membrane-spanning segment; the sequence is LTVASFLGLLVFLTPIAFILL. The Extracellular segment spans residues 136 to 153; that stretch reads PQILWREELKPCGAICEG. The helical transmembrane segment at 154–174 threads the bilayer; the sequence is LLISVSFKLLILLIGTWALFF. Over 175–184 the chain is Cytoplasmic; it reads RKQRADVPRV. A helical membrane pass occupies residues 185 to 205; sequence FVFRALLLVLIFLFVVSYWLF. At 206-224 the chain is on the extracellular side; sequence YGVRILDSRDQNYKDIVQY. A helical transmembrane segment spans residues 225-245; the sequence is AVSLVDALLFIHYLAIVLLEL. At 246–526 the chain is on the cytoplasmic side; the sequence is RQLQPMFTLQ…VLRLQSETSV (281 aa).

The protein belongs to the Vang family. In terms of assembly, heterodimer with Vangl2. Interacts through its C-terminal region with the N-terminal half of DVL1, DVL2 and DVL3. The PDZ domain of DVL1, DVL2 and DVL3 is required for the interaction.

The protein resides in the cell membrane. The chain is Vang-like protein 1 (Vangl1) from Mus musculus (Mouse).